The following is a 562-amino-acid chain: MGLQARLLGLLALVIAGKCTYNPEPDQRWMLPPGWVSLGRVDPEEELSLTFALKQRNLERLSELVQAVSDPSSPQYGKYLTLEDVAELVQPSPLTLLTVQKWLSAAGARNCDSVTTQDFLTCWLSVRQAELLLPGAEFHRYVGGPTKTHVIRSPHPYQLPQALAPHVDFVGGLHRFPPSSPRQRPEPQQVGTVSLHLGVTPSVLRQRYNLTAKDVGSGTTNNSQACAQFLEQYFHNSDLTEFMRLFGGSFTHQASVAKVVGKQGRGRAGIEASLDVEYLMSAGANISTWVYSSPGRHEAQEPFLQWLLLLSNESSLPHVHTVSYGDDEDSLSSIYIQRVNTEFMKAAARGLTLLFASGDTGAGCWSVSGRHKFRPSFPASSPYVTTVGGTSFKNPFLITDEVVDYISGGGFSNVFPRPPYQEEAVAQFLKSSSHLPPSSYFNASGRAYPDVAALSDGYWVVSNMVPIPWVSGTSASTPVFGGILSLINEHRILNGRPPLGFLNPRLYQQHGTGLFDVTHGCHESCLNEEVEGQGFCSGPGWDPVTGWGTPNFPALLKTLLNP.

The first 19 residues, 1 to 19, serve as a signal peptide directing secretion; that stretch reads MGLQARLLGLLALVIAGKC. Positions 20–194 are cleaved as a propeptide — removed in mature form; it reads TYNPEPDQRW…PEPQQVGTVS (175 aa). Residues cysteine 111 and cysteine 122 are joined by a disulfide bond. Residues 198–562 enclose the Peptidase S53 domain; that stretch reads GVTPSVLRQR…PALLKTLLNP (365 aa). An N-linked (GlcNAc...) asparagine glycan is attached at asparagine 209. The N-linked (GlcNAc...) (high mannose) asparagine glycan is linked to asparagine 221. Catalysis depends on charge relay system residues glutamate 271 and aspartate 275. Residues asparagine 285, asparagine 312, and asparagine 442 are each glycosylated (N-linked (GlcNAc...) asparagine). Cystine bridges form between cysteine 364–cysteine 525 and cysteine 521–cysteine 536. Residue serine 474 is the Charge relay system of the active site. Ca(2+) is bound by residues aspartate 516 and valine 517. Glycine 538, glycine 540, and aspartate 542 together coordinate Ca(2+).

As to quaternary structure, monomer. Interacts with CLN5. Interacts with CLN3. The cofactor is Ca(2+). Post-translationally, activated by autocatalytic proteolytical processing upon acidification. N-glycosylation is required for processing and activity.

The protein localises to the lysosome. Its subcellular location is the melanosome. The enzyme catalyses Release of an N-terminal tripeptide from a polypeptide, but also has endopeptidase activity.. Its function is as follows. Lysosomal serine protease with tripeptidyl-peptidase I activity. May act as a non-specific lysosomal peptidase which generates tripeptides from the breakdown products produced by lysosomal proteinases. Requires substrates with an unsubstituted N-terminus. In Mus musculus (Mouse), this protein is Tripeptidyl-peptidase 1 (Tpp1).